The following is a 192-amino-acid chain: Phosphoheptose isomerase (192 aa).

Residues 37 to 192 (LADSFKAGGK…IQLIEKEMAK (156 aa)) enclose the SIS domain. Residue 52–54 (NGG) coordinates substrate. Zn(2+) contacts are provided by His-61 and Glu-65. Residues Glu-65, 93–94 (ND), 119–121 (STS), Ser-124, and Gln-172 each bind substrate. Zn(2+)-binding residues include Gln-172 and His-180.

This sequence belongs to the SIS family. GmhA subfamily. Homotetramer. The cofactor is Zn(2+).

Its subcellular location is the cytoplasm. It catalyses the reaction 2 D-sedoheptulose 7-phosphate = D-glycero-alpha-D-manno-heptose 7-phosphate + D-glycero-beta-D-manno-heptose 7-phosphate. Its pathway is carbohydrate biosynthesis; D-glycero-D-manno-heptose 7-phosphate biosynthesis; D-glycero-alpha-D-manno-heptose 7-phosphate and D-glycero-beta-D-manno-heptose 7-phosphate from sedoheptulose 7-phosphate: step 1/1. Catalyzes the isomerization of sedoheptulose 7-phosphate in D-glycero-D-manno-heptose 7-phosphate. The chain is Phosphoheptose isomerase from Escherichia fergusonii (strain ATCC 35469 / DSM 13698 / CCUG 18766 / IAM 14443 / JCM 21226 / LMG 7866 / NBRC 102419 / NCTC 12128 / CDC 0568-73).